A 1087-amino-acid polypeptide reads, in one-letter code: Exportin-7-B (1087 aa).

Positions 30–96 (AEKALVEFTN…RNYVLTYLAT (67 aa)) constitute an Importin N-terminal domain.

It belongs to the exportin family.

It localises to the cytoplasm. The protein localises to the nucleus. In terms of biological role, mediates the nuclear export of proteins (cargos) with broad substrate specificity. This chain is Exportin-7-B (xpo7-b), found in Xenopus laevis (African clawed frog).